Reading from the N-terminus, the 496-residue chain is Hexokinase-1 (496 aa).

A helical transmembrane segment spans residues 4–24 (VAVGATVVCTAAVCAVAVLVV). The 453-residue stretch at 35–487 (GRVLAILKAF…SGIGAALLAA (453 aa)) folds into the Hexokinase domain. Residues 90–228 (SGDEKGLFYA…GLDMRIAALV (139 aa)) form a hexokinase small subdomain region. Gly104, Thr105, and Asn106 together coordinate ADP. Positions 194, 195, 229, and 230 each coordinate D-glucose. The tract at residues 229-476 (NDTVGTLAGG…GSVEVTHSND (248 aa)) is hexokinase large subdomain. Residue Thr253 coordinates ADP. Positions 256, 284, and 315 each coordinate D-glucose. Residue Gly441 participates in ADP binding.

The protein belongs to the hexokinase family. In terms of assembly, interacts with RPT5B in nucleus. Interacts with RHIP1. Interacts with KING1 in mitochondria. Interacts with CLF (via SANT domain) and EZA1/SWN (via SANT domain) in nucleus. As to expression, highly expressed in flowers and siliques, at intermediate levels in roots and stems, and at lower levels in rosette and cauline leaves.

Its subcellular location is the mitochondrion outer membrane. The protein resides in the nucleus. The enzyme catalyses a D-hexose + ATP = a D-hexose 6-phosphate + ADP + H(+). The catalysed reaction is D-fructose + ATP = D-fructose 6-phosphate + ADP + H(+). It catalyses the reaction D-glucose + ATP = D-glucose 6-phosphate + ADP + H(+). The protein operates within carbohydrate metabolism; hexose metabolism. It participates in carbohydrate degradation; glycolysis; D-glyceraldehyde 3-phosphate and glycerone phosphate from D-glucose: step 1/4. In terms of biological role, fructose and glucose phosphorylating enzyme. May be involved in the phosphorylation of glucose during the export from mitochondrion to cytosol. Acts as a sugar sensor which may regulate sugar-dependent gene repression or activation. Mediates the effects of sugar on plant growth and development independently of its catalytic activity or the sugar metabolism. May regulate the execution of program cell death in plant cells. Promotes roots and leaves growth. Together with sugar, is involved in the regulation of the expression of aquaporin genes, and reduces leaf water conductance, to coordinate sugar levels with the loss of water through transpiration. Regulates cell proliferation and expansion early during leaf development. Involved in sucrose-induced leaf growth stimulation independently of GPT2. May participate to the stimulation of hypocotyl elongation under long-day (LD) conditions. Forms a nuclear complex with CLF and EZA1/SWN to target common glucose-responsive genes and regulate glucose signaling. Is required for CLF- and EZA1/SWN-mediated histone H3 trimethylation on 'Lys-27' (H3K27me3) and glucose-mediated gene repression. The protein is Hexokinase-1 of Arabidopsis thaliana (Mouse-ear cress).